The chain runs to 593 residues: NADH-quinone oxidoreductase subunit C/D (593 aa).

Positions 1–184 (MTADNAIFIP…DPYSLTLAKQ (184 aa)) are NADH dehydrogenase I subunit C. The tract at residues 208–593 (DYMFLNLGPN…IDFVMADVDR (386 aa)) is NADH dehydrogenase I subunit D.

This sequence in the N-terminal section; belongs to the complex I 30 kDa subunit family. The protein in the C-terminal section; belongs to the complex I 49 kDa subunit family. As to quaternary structure, NDH-1 is composed of 13 different subunits. Subunits NuoB, CD, E, F, and G constitute the peripheral sector of the complex.

Its subcellular location is the cell inner membrane. The catalysed reaction is a quinone + NADH + 5 H(+)(in) = a quinol + NAD(+) + 4 H(+)(out). Functionally, NDH-1 shuttles electrons from NADH, via FMN and iron-sulfur (Fe-S) centers, to quinones in the respiratory chain. The immediate electron acceptor for the enzyme in this species is believed to be ubiquinone. Couples the redox reaction to proton translocation (for every two electrons transferred, four hydrogen ions are translocated across the cytoplasmic membrane), and thus conserves the redox energy in a proton gradient. The chain is NADH-quinone oxidoreductase subunit C/D from Pseudomonas putida (strain W619).